Here is a 206-residue protein sequence, read N- to C-terminus: MARYLGPKLKLSRREGTDLFLKSGVRAIESKCKIDNAPGVHGARKPRLSDYGLQLREKQKVRRMYGVLEKQFRNYYKESARLQGNTGENLLQLLEGRLDNVVYRMGFGATRAESRQLVSHKAVLVNGKVVNIPSFNVKASDVIAIREKAKKQSRIGAALEIAGQREVPTWVSVDATKMEGVFTRQPERSDLSAEINEQLIIELYSK.

An S4 RNA-binding domain is found at 96 to 156 (GRLDNVVYRM…EKAKKQSRIG (61 aa)).

This sequence belongs to the universal ribosomal protein uS4 family. As to quaternary structure, part of the 30S ribosomal subunit. Contacts protein S5. The interaction surface between S4 and S5 is involved in control of translational fidelity.

One of the primary rRNA binding proteins, it binds directly to 16S rRNA where it nucleates assembly of the body of the 30S subunit. In terms of biological role, with S5 and S12 plays an important role in translational accuracy. This Psychromonas ingrahamii (strain DSM 17664 / CCUG 51855 / 37) protein is Small ribosomal subunit protein uS4A.